Reading from the N-terminus, the 161-residue chain is Arachidonate 5-lipoxygenase-activating protein (161 aa).

Residues methionine 1–asparagine 8 lie on the Lumenal side of the membrane. The chain crosses the membrane as a helical span at residues isoleucine 9–valine 30. The Cytoplasmic portion of the chain corresponds to glutamate 31–arginine 52. The chain crosses the membrane as a helical span at residues valine 53–leucine 77. Over cysteine 78–glutamine 80 the chain is Lumenal. The chain crosses the membrane as a helical span at residues valine 81 to leucine 102. Residues glycine 103 to glutamine 107 are Cytoplasmic-facing. Residues serine 108–glycine 115 lie within the membrane without spanning it. Residues lysine 116 to alanine 128 traverse the membrane as a helical segment. The Lumenal portion of the chain corresponds to glycine 129–proline 161.

The protein belongs to the MAPEG family. Homotrimer. Interacts with LTC4S and ALOX5.

It localises to the nucleus membrane. The protein resides in the endoplasmic reticulum membrane. Functionally, required for leukotriene biosynthesis by ALOX5 (5-lipoxygenase). Anchors ALOX5 to the membrane. Binds arachidonic acid, and could play an essential role in the transfer of arachidonic acid to ALOX5. Binds to MK-886, a compound that blocks the biosynthesis of leukotrienes. The protein is Arachidonate 5-lipoxygenase-activating protein (ALOX5AP) of Bos taurus (Bovine).